We begin with the raw amino-acid sequence, 393 residues long: Polygalacturonase (393 aa).

The first 23 residues, 1 to 23 (MANRRSLFSLSLIFVFMINSAIA), serve as a signal peptide directing secretion. 6 PbH1 repeats span residues 115–136 (VNGVTISGGILDGQGTALWACK), 178–204 (FQNVQMQGVRVSRSGNSPNTDGIHVQM), 205–226 (SSGVTILNSKIATGDDCVSIGP), 228–248 (TSNLWIEGVACGPGHGISIGS), 258–279 (VQNVTVKTVTFSGTQNGLRIKS), and 288–309 (ARNILFQHATMVNVENPIVIDQ). Catalysis depends on aspartate 219, which acts as the Proton donor. Cysteines 221 and 238 form a disulfide. Histidine 242 is an active-site residue. N-linked (GlcNAc...) asparagine glycosylation is present at asparagine 260. 2 disulfide bridges follow: cysteine 349/cysteine 355 and cysteine 376/cysteine 392.

It belongs to the glycosyl hydrolase 28 family.

It localises to the secreted. The protein resides in the cell wall. It carries out the reaction (1,4-alpha-D-galacturonosyl)n+m + H2O = (1,4-alpha-D-galacturonosyl)n + (1,4-alpha-D-galacturonosyl)m.. In terms of biological role, acts in concert with the pectinesterase, in the ripening process. Is involved in cell wall metabolism, specifically in polyuronide degradation. The chain is Polygalacturonase from Prunus persica (Peach).